We begin with the raw amino-acid sequence, 561 residues long: DNA ligase B (561 aa).

Catalysis depends on Lys125, which acts as the N6-AMP-lysine intermediate.

The protein belongs to the NAD-dependent DNA ligase family. LigB subfamily.

It carries out the reaction NAD(+) + (deoxyribonucleotide)n-3'-hydroxyl + 5'-phospho-(deoxyribonucleotide)m = (deoxyribonucleotide)n+m + AMP + beta-nicotinamide D-nucleotide.. Catalyzes the formation of phosphodiester linkages between 5'-phosphoryl and 3'-hydroxyl groups in double-stranded DNA using NAD as a coenzyme and as the energy source for the reaction. The protein is DNA ligase B of Salmonella schwarzengrund (strain CVM19633).